We begin with the raw amino-acid sequence, 759 residues long: LPS-assembly protein LptD (759 aa).

A signal peptide spans 1-45 (MKPLKLELNPRDFNHYQAAFLPYRMKIKQPLHVLCFSVCSLSAVA).

Belongs to the LptD family. Component of the lipopolysaccharide transport and assembly complex. Interacts with LptE and LptA.

The protein resides in the cell outer membrane. Together with LptE, is involved in the assembly of lipopolysaccharide (LPS) at the surface of the outer membrane. This is LPS-assembly protein LptD from Pseudoalteromonas atlantica (strain T6c / ATCC BAA-1087).